Here is a 555-residue protein sequence, read N- to C-terminus: uncharacterized protein (555 aa).

ABC transporter domains follow at residues 4 to 244 (VKVK…PPYK) and 255 to 547 (IQVR…ARFM). ATP-binding positions include 36 to 43 (GKSGAGKS) and 292 to 299 (GPSGVGKT).

It belongs to the ABC transporter superfamily.

This is an uncharacterized protein from Methanocaldococcus jannaschii (strain ATCC 43067 / DSM 2661 / JAL-1 / JCM 10045 / NBRC 100440) (Methanococcus jannaschii).